The following is a 654-amino-acid chain: MICOS complex subunit MIC60-2 (654 aa).

Residues 1–12 (MRGSRNLLTQRL) constitute a mitochondrion transit peptide. Residues 13–20 (ASSRATGS) lie on the Mitochondrial matrix side of the membrane. A helical transmembrane segment spans residues 21-43 (SGGLKFVGATVGAVTAGAAGVAG). Residues 44 to 654 (YASYDNEFRK…AALTSIRSTY (611 aa)) lie on the Mitochondrial intermembrane side of the membrane. Residues 115–129 (LKETTEPKKIEKKPE) show a composition bias toward basic and acidic residues. The interval 115–140 (LKETTEPKKIEKKPENPYIGAKTPLN) is disordered.

This sequence belongs to the MICOS complex subunit Mic60 family. As to quaternary structure, component of the mitochondrial contact site and cristae organizing system (MICOS) complex. In terms of tissue distribution, expressed in the gonads and muscle cells.

The protein localises to the mitochondrion inner membrane. It localises to the cytoplasm. In terms of biological role, sustains mitochondrial morphology probably through maintaining cristae morphology. May act as a component of the MICOS complex, a large protein complex of the mitochondria. This is MICOS complex subunit MIC60-2 from Caenorhabditis elegans.